Reading from the N-terminus, the 504-residue chain is Signal transduction histidine-protein kinase/phosphatase MprB (504 aa).

The Cytoplasmic portion of the chain corresponds to 1–26 (MWWFRRRDRAPLRATSSLSLRWRVML). A helical membrane pass occupies residues 27-47 (LAMSMVAMVVVLMSFAVYAVI). Residues 48 to 163 (SAALYSDIDN…PTEAVMNKLR (116 aa)) lie on the Extracellular side of the membrane. Residues 164 to 184 (WVLLIVGGIGVAVAAVAGGMV) traverse the membrane as a helical segment. Over 185-504 (TRAGLRPVGR…SVESQSTRAT (320 aa)) the chain is Cytoplasmic. Residues 186 to 238 (RAGLRPVGRLTEAAERVARTDDLRPIPVFGSDELARLTEAFNLMLRALAESRE) enclose the HAMP domain. The 221-residue stretch at 246-466 (DAGHELRTPL…SIYVLLPGRR (221 aa)) folds into the Histidine kinase domain. Phosphohistidine; by autocatalysis is present on histidine 249. A disordered region spans residues 471 to 504 (QLPGATAGARSTDIENSRGSANVISVESQSTRAT). Over residues 487 to 504 (SRGSANVISVESQSTRAT) the composition is skewed to polar residues.

Mg(2+) is required as a cofactor. Mn(2+) serves as cofactor. Post-translationally, autophosphorylated.

The protein localises to the cell membrane. The enzyme catalyses ATP + protein L-histidine = ADP + protein N-phospho-L-histidine.. In terms of biological role, member of the two-component regulatory system MprB/MprA which contributes to maintaining a balance among several systems involved in stress resistance and is required for establishment and maintenance of persistent infection in the host. In response to environmental signals MprB acts both as a membrane-associated protein kinase that undergoes autophosphorylation and subsequently transfers the phosphate to MprA, and a protein phosphatase that dephosphorylates phospho-MprA. MprB/MprA up-regulates expression of mprA and pepD. This is Signal transduction histidine-protein kinase/phosphatase MprB (mprB) from Mycobacterium bovis (strain ATCC BAA-935 / AF2122/97).